Consider the following 202-residue polypeptide: LexA repressor (202 aa).

Positions 28–48 (RAEIAQELGFKSPNAAEEHLK) form a DNA-binding region, H-T-H motif. Residues Ser-123 and Lys-160 each act as for autocatalytic cleavage activity in the active site.

Belongs to the peptidase S24 family. In terms of assembly, homodimer.

The catalysed reaction is Hydrolysis of Ala-|-Gly bond in repressor LexA.. Represses a number of genes involved in the response to DNA damage (SOS response), including recA and lexA. In the presence of single-stranded DNA, RecA interacts with LexA causing an autocatalytic cleavage which disrupts the DNA-binding part of LexA, leading to derepression of the SOS regulon and eventually DNA repair. This Pseudomonas putida (Arthrobacter siderocapsulatus) protein is LexA repressor.